Here is a 485-residue protein sequence, read N- to C-terminus: Maturase K (485 aa).

It belongs to the intron maturase 2 family. MatK subfamily.

It localises to the plastid. The protein resides in the chloroplast. Its function is as follows. Usually encoded in the trnK tRNA gene intron. Probably assists in splicing its own and other chloroplast group II introns. In Malus domestica (Apple), this protein is Maturase K.